The sequence spans 270 residues: Oxidoreductase NAD-binding domain-containing protein 1 (270 aa).

The 104-residue stretch at 20–123 (MELFSARVCD…VGGNFYFDPQ (104 aa)) folds into the FAD-binding FR-type domain. 137–142 (GVGINP) is an NAD(+) binding site.

This chain is Oxidoreductase NAD-binding domain-containing protein 1 (oxnad1), found in Danio rerio (Zebrafish).